The following is a 288-amino-acid chain: Pteridine reductase 1 (288 aa).

Position 17–40 (17–40 (RLGRSIAEGLHAEGYAVCLHYHRS)) interacts with NADP(+). Residue Ser-175 participates in substrate binding. The active-site Proton acceptor is Tyr-194.

Belongs to the short-chain dehydrogenases/reductases (SDR) family. In terms of assembly, homotetramer.

The catalysed reaction is (6R)-L-erythro-5,6,7,8-tetrahydrobiopterin + 2 NADP(+) = L-erythro-biopterin + 2 NADPH + 2 H(+). Its pathway is cofactor biosynthesis; tetrahydrobiopterin biosynthesis; tetrahydrobiopterin from biopterin: step 1/1. Functionally, exhibits a NADPH-dependent biopterin reductase activity. Has good activity with folate and significant activity with dihydrofolate and dihydrobiopterin, but not with quinonoid dihydrobiopterin. Confers resistance to methotrexate (MTX). This is Pteridine reductase 1 (PTR1) from Leishmania major.